The chain runs to 176 residues: Isopentenyl-diphosphate Delta-isomerase (176 aa).

His-24 and His-30 together coordinate Mn(2+). The Nudix hydrolase domain maps to 28–160 (LLHRAFSIFV…PSAFTVWFHC (133 aa)). The active site involves Cys-65. Position 67 (His-67) interacts with Mn(2+). Glu-85 is a binding site for Mg(2+). 2 residues coordinate Mn(2+): Glu-110 and Glu-112. Glu-112 is a catalytic residue.

It belongs to the IPP isomerase type 1 family. Mg(2+) is required as a cofactor. It depends on Mn(2+) as a cofactor.

It is found in the cytoplasm. The enzyme catalyses isopentenyl diphosphate = dimethylallyl diphosphate. It functions in the pathway isoprenoid biosynthesis; dimethylallyl diphosphate biosynthesis; dimethylallyl diphosphate from isopentenyl diphosphate: step 1/1. Its function is as follows. Catalyzes the 1,3-allylic rearrangement of the homoallylic substrate isopentenyl (IPP) to its highly electrophilic allylic isomer, dimethylallyl diphosphate (DMAPP). This is Isopentenyl-diphosphate Delta-isomerase from Burkholderia multivorans (strain ATCC 17616 / 249).